Here is a 388-residue protein sequence, read N- to C-terminus: Calreticulin (388 aa).

The signal sequence occupies residues 1–17 (MQLSLLVGLVCFSAINA). Cys-103 and Cys-135 are joined by a disulfide. An alpha-D-glucoside contacts are provided by Tyr-107, Lys-109, Tyr-126, and Asp-133. Tandem repeats lie at residues 189–200 (AESGELEADWDF), 208–219 (DPDAKKPEDWDE), 225–236 (DEDDKKPEDWDK), 242–253 (DPDAKKPEDWDD), 257–267 (GEWEPPMVDNP), 271–281 (GEWKPKQKKNP), and 285–295 (GKWIHPEIEIP). The interval 189-253 (AESGELEADW…DAKKPEDWDD (65 aa)) is 4 X approximate repeats. The disordered stretch occupies residues 193-282 (ELEADWDFLP…WKPKQKKNPA (90 aa)). Residues 205 to 215 (KIKDPDAKKPE) are compositionally biased toward basic and acidic residues. Positions 216–227 (DWDEREFIDDED) are enriched in acidic residues. The segment covering 228–249 (DKKPEDWDKPEHIPDPDAKKPE) has biased composition (basic and acidic residues). A compositionally biased stretch (acidic residues) spans 250-259 (DWDDEMDGEW). Positions 257–295 (GEWEPPMVDNPEYKGEWKPKQKKNPAYKGKWIHPEIEIP) are 3 X approximate repeats. Asp-315 contacts an alpha-D-glucoside. Residues 349 to 388 (REGEKKKGKKTKKQKKKEKNEKIKKEKMKKRKRANRKKKK) are disordered. Basic residues-rich tracts occupy residues 354–365 (KKGKKTKKQKKK) and 373–388 (KEKM…KKKK).

This sequence belongs to the calreticulin family.

It is found in the endoplasmic reticulum lumen. Functionally, molecular calcium-binding chaperone promoting folding, oligomeric assembly and quality control in the ER via the calreticulin/calnexin cycle. This lectin may interact transiently with almost all of the monoglucosylated glycoproteins that are synthesized in the ER. This is Calreticulin (crt-1) from Onchocerca volvulus.